Here is a 378-residue protein sequence, read N- to C-terminus: uncharacterized protein (378 aa).

This is an uncharacterized protein from Escherichia coli (strain K12).